The chain runs to 592 residues: Anaphase-promoting complex subunit 8 (592 aa).

8 TPR repeats span residues 66–99 (EYYK…QLPI), 160–193 (QQQQ…NKKD), 291–324 (TYIL…EPNR), 359–392 (PETC…NDRY), 393–426 (LSAW…NPRD), 428–460 (RAWY…RPYD), 461–494 (PRMW…YDRE), and 496–528 (VAIN…CDQE). Positions 129–166 (QQQAQQQAQQAQQESQQNDKNNDTNNNNKTDQQQQQQQ) are disordered.

Belongs to the APC8/CDC23 family. As to quaternary structure, the APC/C is composed of at least 13 subunits that stay tightly associated throughout the cell cycle: anapc1, anapc2, anapc3, anapc4, anapc5, anapc6, anapc7, anapc8, anapc10, anapc11, cdc20, cdc26 and cdh1.

Its subcellular location is the nucleus. The protein operates within protein modification; protein ubiquitination. Functionally, component of the anaphase promoting complex/cyclosome (APC/C), a cell cycle-regulated E3 ubiquitin-protein ligase complex that controls progression through mitosis and the G1 phase of the cell cycle. The chain is Anaphase-promoting complex subunit 8 (anapc8) from Dictyostelium discoideum (Social amoeba).